Consider the following 352-residue polypeptide: uncharacterized protein (352 aa).

The signal sequence occupies residues 1–21 (MNVDSRVFRFFLVFLILVVVA).

It belongs to the bacterial solute-binding protein 1 family. WtpA subfamily.

This is an uncharacterized protein from Methanosarcina acetivorans (strain ATCC 35395 / DSM 2834 / JCM 12185 / C2A).